Here is a 202-residue protein sequence, read N- to C-terminus: MNILNKLGIGSSRQTNMDPSPIAQVIDDEAPAPGNQFTQFGAGCFWSVELAYQRVPGVTQTEVGYSQGITHDPSYKDVCSGTTNHAEIVRVQYDPKECSYQSLLDLFWSKHDPTTLNRQGNDVGTQYRSGIYFYNPEQEKLARESLERHQQQVDRKVVTEILPAKKFYRAEEHHQQYLSKGGRFGLKQSTEKGCNDPIRCYG.

The disordered stretch occupies residues Met1 to Ser20. At Ser189 the chain carries Phosphoserine.

It belongs to the MsrA Met sulfoxide reductase family.

Its subcellular location is the cytoplasm. The protein localises to the cytosol. It carries out the reaction L-methionyl-[protein] + [thioredoxin]-disulfide + H2O = L-methionyl-(S)-S-oxide-[protein] + [thioredoxin]-dithiol. The catalysed reaction is [thioredoxin]-disulfide + L-methionine + H2O = L-methionine (S)-S-oxide + [thioredoxin]-dithiol. Functionally, catalyzes the reduction of methionine sulfoxide (MetSO) to methionine in proteins. Plays a protective role against oxidative stress by restoring activity to proteins that have been inactivated by methionine oxidation. MSRA family specifically reduces the MetSO S-enantiomer. The sequence is that of Peptide methionine sulfoxide reductase A1 (MSRA1) from Arabidopsis thaliana (Mouse-ear cress).